The chain runs to 210 residues: Thymidylate kinase (210 aa).

ATP is bound at residue 11–18 (GVDGSGKS).

It belongs to the thymidylate kinase family.

The enzyme catalyses dTMP + ATP = dTDP + ADP. Its function is as follows. Phosphorylation of dTMP to form dTDP in both de novo and salvage pathways of dTTP synthesis. This Mycoplasmoides gallisepticum (strain R(low / passage 15 / clone 2)) (Mycoplasma gallisepticum) protein is Thymidylate kinase.